We begin with the raw amino-acid sequence, 121 residues long: Large ribosomal subunit protein bL12 (121 aa).

The protein belongs to the bacterial ribosomal protein bL12 family. Homodimer. Part of the ribosomal stalk of the 50S ribosomal subunit. Forms a multimeric L10(L12)X complex, where L10 forms an elongated spine to which 2 to 4 L12 dimers bind in a sequential fashion. Binds GTP-bound translation factors.

Its function is as follows. Forms part of the ribosomal stalk which helps the ribosome interact with GTP-bound translation factors. Is thus essential for accurate translation. The protein is Large ribosomal subunit protein bL12 of Clostridioides difficile (strain 630) (Peptoclostridium difficile).